We begin with the raw amino-acid sequence, 578 residues long: Glutathione hydrolase 2 (578 aa).

Positions 1–26 are cleaved as a signal peptide; sequence MNSFMSLVRTATIALLLIAFLQNANA. The N-linked (GlcNAc...) asparagine glycan is linked to asparagine 94. An L-glutamate-binding site is contributed by arginine 103. Asparagine 176 and asparagine 227 each carry an N-linked (GlcNAc...) asparagine glycan. Threonine 374 functions as the Nucleophile in the catalytic mechanism. L-glutamate is bound by residues threonine 392, asparagine 394, glutamate 413, aspartate 416, 446 to 447, and 467 to 468; these read SS and GG. N-linked (GlcNAc...) asparagine glycosylation is present at asparagine 511.

This sequence belongs to the gamma-glutamyltransferase family. As to expression, expressed in roots, immature trichomes and pollen. In developing siliques, specifically expressed in the embryo, endosperm, outer integument and a small portion of the funiculus.

Its subcellular location is the secreted. The protein localises to the extracellular space. It is found in the apoplast. The enzyme catalyses an N-terminal (5-L-glutamyl)-[peptide] + an alpha-amino acid = 5-L-glutamyl amino acid + an N-terminal L-alpha-aminoacyl-[peptide]. It catalyses the reaction glutathione + H2O = L-cysteinylglycine + L-glutamate. It carries out the reaction an S-substituted glutathione + H2O = an S-substituted L-cysteinylglycine + L-glutamate. The protein operates within sulfur metabolism; glutathione metabolism. Its function is as follows. May be required for glutathione transport into developing seeds. This is Glutathione hydrolase 2 (GGT2) from Arabidopsis thaliana (Mouse-ear cress).